The primary structure comprises 380 residues: Cytochrome b (380 aa).

4 consecutive transmembrane segments (helical) span residues 34 to 54 (FGSL…LLAA), 78 to 99 (WLIR…YLHI), 114 to 134 (WNTG…GYVL), and 179 to 199 (FFTL…IHLT). Heme b-binding residues include histidine 84 and histidine 98. The heme b site is built by histidine 183 and histidine 197. Histidine 202 is a binding site for a ubiquinone. The next 4 membrane-spanning stretches (helical) occupy residues 227–247 (LKDI…ALFS), 289–309 (LGGV…PLLH), 321–341 (FSQL…WVGS), and 348–368 (FIII…ILFP).

The protein belongs to the cytochrome b family. The cytochrome bc1 complex contains 11 subunits: 3 respiratory subunits (MT-CYB, CYC1 and UQCRFS1), 2 core proteins (UQCRC1 and UQCRC2) and 6 low-molecular weight proteins (UQCRH/QCR6, UQCRB/QCR7, UQCRQ/QCR8, UQCR10/QCR9, UQCR11/QCR10 and a cleavage product of UQCRFS1). This cytochrome bc1 complex then forms a dimer. It depends on heme b as a cofactor.

It localises to the mitochondrion inner membrane. Its function is as follows. Component of the ubiquinol-cytochrome c reductase complex (complex III or cytochrome b-c1 complex) that is part of the mitochondrial respiratory chain. The b-c1 complex mediates electron transfer from ubiquinol to cytochrome c. Contributes to the generation of a proton gradient across the mitochondrial membrane that is then used for ATP synthesis. This Bugeranus carunculatus (Wattled crane) protein is Cytochrome b (MT-CYB).